The following is a 247-amino-acid chain: NAD-dependent protein deacetylase (247 aa).

The Deacetylase sirtuin-type domain maps to 1 to 247 (MDTRKNLKEL…LGGIVEELGY (247 aa)). 8 residues coordinate NAD(+): alanine 23, threonine 27, phenylalanine 34, arginine 35, glutamine 104, isoleucine 106, aspartate 107, and histidine 122. Phenylalanine 34 is a nicotinamide binding site. Residues isoleucine 106 and aspartate 107 each contribute to the nicotinamide site. Catalysis depends on histidine 122, which acts as the Proton acceptor. Cysteine 130, cysteine 133, cysteine 152, and cysteine 155 together coordinate Zn(2+). Residues threonine 193, serine 194, asparagine 216, and isoleucine 234 each coordinate NAD(+).

This sequence belongs to the sirtuin family. Class U subfamily. It depends on Zn(2+) as a cofactor.

It is found in the cytoplasm. It carries out the reaction N(6)-acetyl-L-lysyl-[protein] + NAD(+) + H2O = 2''-O-acetyl-ADP-D-ribose + nicotinamide + L-lysyl-[protein]. Its function is as follows. NAD-dependent protein deacetylase which modulates the activities of several enzymes which are inactive in their acetylated form. In Clostridium tetani (strain Massachusetts / E88), this protein is NAD-dependent protein deacetylase.